Reading from the N-terminus, the 972-residue chain is RNA polymerase-associated protein RapA (972 aa).

Residues 164 to 334 (EVGRRYAPRV…FARLRLLDPD (171 aa)) form the Helicase ATP-binding domain. 177-184 (DEVGLGKT) provides a ligand contact to ATP. Positions 280 to 283 (DEAH) match the DEAH box motif. The Helicase C-terminal domain maps to 493–671 (RVNWLLEMLK…HEPEALENLI (179 aa)).

The protein belongs to the SNF2/RAD54 helicase family. RapA subfamily. Interacts with the RNAP. Has a higher affinity for the core RNAP than for the holoenzyme. Its ATPase activity is stimulated by binding to RNAP.

Transcription regulator that activates transcription by stimulating RNA polymerase (RNAP) recycling in case of stress conditions such as supercoiled DNA or high salt concentrations. Probably acts by releasing the RNAP, when it is trapped or immobilized on tightly supercoiled DNA. Does not activate transcription on linear DNA. Probably not involved in DNA repair. This Photobacterium profundum (strain SS9) protein is RNA polymerase-associated protein RapA.